A 103-amino-acid chain; its full sequence is Astacin-like peptidase p16 (103 aa).

Positions 1–103 (NAIPGQHYRW…DAFSRDGSPM (103 aa)) constitute a Peptidase M12A domain.

Requires Zn(2+) as cofactor.

Active against casein. Has a role as a digestive enzyme. The protein is Astacin-like peptidase p16 of Argiope aurantia (Black-and-yellow garden spider).